The following is a 380-amino-acid chain: Cytochrome b (380 aa).

The next 4 membrane-spanning stretches (helical) occupy residues 34-54 (FGSLLTICLLTQILTGLLLAM), 78-99 (WLIRNLHANGASFFFICIYLHI), 114-134 (WNTGVILLLTLMATAFVGYVL), and 179-199 (FFALHFLLPFMIVGLSMIHLT). Heme b contacts are provided by H84 and H98. H183 and H197 together coordinate heme b. H202 is an a ubiquinone binding site. 4 consecutive transmembrane segments (helical) span residues 227–247 (LKDILGFILMLLPLTTLALFS), 289–309 (LGGVLALAASVLILFLAPFLH), 321–341 (ISQLLFWILVANLLILTWVGS), and 348–368 (FIIIGQLASITYFTILLILFP).

Belongs to the cytochrome b family. In terms of assembly, the cytochrome bc1 complex contains 11 subunits: 3 respiratory subunits (MT-CYB, CYC1 and UQCRFS1), 2 core proteins (UQCRC1 and UQCRC2) and 6 low-molecular weight proteins (UQCRH/QCR6, UQCRB/QCR7, UQCRQ/QCR8, UQCR10/QCR9, UQCR11/QCR10 and a cleavage product of UQCRFS1). This cytochrome bc1 complex then forms a dimer. Heme b serves as cofactor.

It localises to the mitochondrion inner membrane. Component of the ubiquinol-cytochrome c reductase complex (complex III or cytochrome b-c1 complex) that is part of the mitochondrial respiratory chain. The b-c1 complex mediates electron transfer from ubiquinol to cytochrome c. Contributes to the generation of a proton gradient across the mitochondrial membrane that is then used for ATP synthesis. This chain is Cytochrome b (MT-CYB), found in Pelecanoides garnotii (Peruvian diving petrel).